The following is a 363-amino-acid chain: S-adenosylmethionine:tRNA ribosyltransferase-isomerase (363 aa).

It belongs to the QueA family. As to quaternary structure, monomer.

It is found in the cytoplasm. It carries out the reaction 7-aminomethyl-7-carbaguanosine(34) in tRNA + S-adenosyl-L-methionine = epoxyqueuosine(34) in tRNA + adenine + L-methionine + 2 H(+). It participates in tRNA modification; tRNA-queuosine biosynthesis. Functionally, transfers and isomerizes the ribose moiety from AdoMet to the 7-aminomethyl group of 7-deazaguanine (preQ1-tRNA) to give epoxyqueuosine (oQ-tRNA). The sequence is that of S-adenosylmethionine:tRNA ribosyltransferase-isomerase from Brucella anthropi (strain ATCC 49188 / DSM 6882 / CCUG 24695 / JCM 21032 / LMG 3331 / NBRC 15819 / NCTC 12168 / Alc 37) (Ochrobactrum anthropi).